A 118-amino-acid chain; its full sequence is Large ribosomal subunit protein bL19 (118 aa).

This sequence belongs to the bacterial ribosomal protein bL19 family.

Its function is as follows. This protein is located at the 30S-50S ribosomal subunit interface and may play a role in the structure and function of the aminoacyl-tRNA binding site. In Campylobacter hominis (strain ATCC BAA-381 / DSM 21671 / CCUG 45161 / LMG 19568 / NCTC 13146 / CH001A), this protein is Large ribosomal subunit protein bL19.